The primary structure comprises 131 residues: Small ribosomal subunit protein uS8 (131 aa).

It belongs to the universal ribosomal protein uS8 family. In terms of assembly, part of the 30S ribosomal subunit. Contacts proteins S5 and S12.

In terms of biological role, one of the primary rRNA binding proteins, it binds directly to 16S rRNA central domain where it helps coordinate assembly of the platform of the 30S subunit. The sequence is that of Small ribosomal subunit protein uS8 from Cupriavidus necator (strain ATCC 17699 / DSM 428 / KCTC 22496 / NCIMB 10442 / H16 / Stanier 337) (Ralstonia eutropha).